The primary structure comprises 371 residues: Putative 8-amino-7-oxononanoate synthase (371 aa).

Position 21 (arginine 21) interacts with substrate. Residue glycine 108–tyrosine 109 participates in pyridoxal 5'-phosphate binding. Residue histidine 133 participates in substrate binding. Pyridoxal 5'-phosphate contacts are provided by residues serine 180, aspartate 205–histidine 208, and threonine 234–lysine 237. Lysine 237 is subject to N6-(pyridoxal phosphate)lysine. Threonine 333 contributes to the substrate binding site.

It belongs to the class-II pyridoxal-phosphate-dependent aminotransferase family. BioF subfamily. Homodimer. The cofactor is pyridoxal 5'-phosphate.

It carries out the reaction 6-carboxyhexanoyl-[ACP] + L-alanine + H(+) = (8S)-8-amino-7-oxononanoate + holo-[ACP] + CO2. It participates in cofactor biosynthesis; biotin biosynthesis. Its function is as follows. Catalyzes the decarboxylative condensation of pimeloyl-[acyl-carrier protein] and L-alanine to produce 8-amino-7-oxononanoate (AON), [acyl-carrier protein], and carbon dioxide. The protein is Putative 8-amino-7-oxononanoate synthase (bioF) of Bacillus subtilis subsp. natto.